Here is a 131-residue protein sequence, read N- to C-terminus: Hydrophilin PGA14 (131 aa).

The N-terminal stretch at 1 to 18 (MKFTTVATVFAISSLAAA) is a signal peptide. 2 stretches are compositionally biased toward basic and acidic residues: residues 42 to 59 (YGRF…ETGT) and 79 to 96 (KESD…RDSK). The tract at residues 42–110 (YGRFDKTSRS…NSTTSSGNNG (69 aa)) is disordered. N-linked (GlcNAc...) asparagine glycans are attached at residues N97 and N101. Low complexity predominate over residues 97-110 (NASSNSTTSSGNNG). S105 is lipidated: GPI-anchor amidated serine. Positions 106-131 (SGNNGVATGVSLGLAGVLAVGAALVI) are cleaved as a propeptide — removed in mature form.

Belongs to the PGA14 family. Post-translationally, the GPI-anchor is attached to the protein in the endoplasmic reticulum and serves to target the protein to the cell surface. There, the glucosamine-inositol phospholipid moiety is cleaved off and the GPI-modified mannoprotein is covalently attached via its lipidless GPI glycan remnant to the 1,6-beta-glucan of the outer cell wall layer.

It is found in the secreted. Its subcellular location is the cell wall. The protein resides in the membrane. Its function is as follows. Hydrophilin which is essential to overcome the simple stress of the desiccation-rehydration process. This is Hydrophilin PGA14 (PGA14) from Candida albicans (strain SC5314 / ATCC MYA-2876) (Yeast).